A 1070-amino-acid chain; its full sequence is Isoleucine--tRNA ligase (1070 aa).

Positions 50–60 (PYTSGAAHMGT) match the 'HIGH' region motif. The 'KMSKS' region motif lies at 606 to 610 (GMSKS). Lys-609 serves as a coordination point for ATP.

This sequence belongs to the class-I aminoacyl-tRNA synthetase family. IleS type 2 subfamily. Monomer. It depends on Zn(2+) as a cofactor.

It localises to the cytoplasm. It catalyses the reaction tRNA(Ile) + L-isoleucine + ATP = L-isoleucyl-tRNA(Ile) + AMP + diphosphate. Its function is as follows. Catalyzes the attachment of isoleucine to tRNA(Ile). As IleRS can inadvertently accommodate and process structurally similar amino acids such as valine, to avoid such errors it has two additional distinct tRNA(Ile)-dependent editing activities. One activity is designated as 'pretransfer' editing and involves the hydrolysis of activated Val-AMP. The other activity is designated 'posttransfer' editing and involves deacylation of mischarged Val-tRNA(Ile). The protein is Isoleucine--tRNA ligase of Halobacterium salinarum (strain ATCC 700922 / JCM 11081 / NRC-1) (Halobacterium halobium).